The chain runs to 265 residues: MDTAQKQRWAITLSYDGSRFYGWQKQAGGVPTVQAALETALARIAGESVATTVAGRTDTGVHAAAQVVHFDITAARPQQAWVRGVNAHLPEGIAVLHARQVAPGFHARFDAYGRHYRYLLESAPVRSPLLKNRAGWTHLKLDIEPMRRAAALLIGEQDFSSFRAAGCQAKSPVKTIYRTDLTQSAGLIRLDLHGNAFLHHMVRNIMGALVYVGSGRLSVEGFAALIQERSRLKAPPTFMPDGLYLTGVDYPGAYGIVRPQIPEWL.

Asp-58 acts as the Nucleophile in catalysis. Residue Tyr-116 participates in substrate binding.

This sequence belongs to the tRNA pseudouridine synthase TruA family. In terms of assembly, homodimer.

It catalyses the reaction uridine(38/39/40) in tRNA = pseudouridine(38/39/40) in tRNA. In terms of biological role, formation of pseudouridine at positions 38, 39 and 40 in the anticodon stem and loop of transfer RNAs. The chain is tRNA pseudouridine synthase A from Neisseria gonorrhoeae (strain NCCP11945).